We begin with the raw amino-acid sequence, 62 residues long: uncharacterized protein (62 aa).

This is an uncharacterized protein from Dictyostelium discoideum (Social amoeba).